The primary structure comprises 549 residues: Calcium-dependent protein kinase 5 (549 aa).

G2 carries the N-myristoyl glycine lipid modification. A disordered region spans residues 43-69 (DEPAGKKAPRGSAAAADAPHAASMKRG). Low complexity predominate over residues 52-64 (RGSAAAADAPHAA). A Protein kinase domain is found at 92-350 (YALGRKLGQG…AHEVLCHPWI (259 aa)). Residues 98-106 (LGQGQFGTT) and K121 contribute to the ATP site. Catalysis depends on D216, which acts as the Proton acceptor. Residues 356-386 (APDRPLDPAVLSRIKQFSAMNKLKKMALRVI) form an autoinhibitory domain region. 4 consecutive EF-hand domains span residues 393 to 428 (EEIA…YGST), 429 to 464 (LKDT…LNKL), 465 to 500 (EREE…HNMP), and 501 to 534 (DAFL…GNMG). The Ca(2+) site is built by D406, D408, S410, E417, D442, D444, S446, T448, E453, D478, D480, S482, Y484, E489, D512, D514, D516, R518, and E523.

This sequence belongs to the protein kinase superfamily. Ser/Thr protein kinase family. CDPK subfamily.

Its subcellular location is the membrane. The catalysed reaction is L-seryl-[protein] + ATP = O-phospho-L-seryl-[protein] + ADP + H(+). The enzyme catalyses L-threonyl-[protein] + ATP = O-phospho-L-threonyl-[protein] + ADP + H(+). Its activity is regulated as follows. Activated by calcium. Autophosphorylation may play an important role in the regulation of the kinase activity. In terms of biological role, may play a role in signal transduction pathways that involve calcium as a second messenger. The protein is Calcium-dependent protein kinase 5 of Oryza sativa subsp. japonica (Rice).